Consider the following 745-residue polypeptide: Phosphoribosylformylglycinamidine synthase subunit PurL (745 aa).

H41 is a catalytic residue. Residues Y44 and K83 each contribute to the ATP site. Residue E85 participates in Mg(2+) binding. Substrate-binding positions include 86–89 (SHNH) and R108. H87 acts as the Proton acceptor in catalysis. Residue D109 coordinates Mg(2+). Position 232 (Q232) interacts with substrate. Residue D260 coordinates Mg(2+). A substrate-binding site is contributed by 304–306 (ESQ). The ATP site is built by D494 and G531. Position 532 (N532) interacts with Mg(2+). Residue S534 coordinates substrate.

The protein belongs to the FGAMS family. Monomer. Part of the FGAM synthase complex composed of 1 PurL, 1 PurQ and 2 PurS subunits.

The protein resides in the cytoplasm. It carries out the reaction N(2)-formyl-N(1)-(5-phospho-beta-D-ribosyl)glycinamide + L-glutamine + ATP + H2O = 2-formamido-N(1)-(5-O-phospho-beta-D-ribosyl)acetamidine + L-glutamate + ADP + phosphate + H(+). It participates in purine metabolism; IMP biosynthesis via de novo pathway; 5-amino-1-(5-phospho-D-ribosyl)imidazole from N(2)-formyl-N(1)-(5-phospho-D-ribosyl)glycinamide: step 1/2. Its function is as follows. Part of the phosphoribosylformylglycinamidine synthase complex involved in the purines biosynthetic pathway. Catalyzes the ATP-dependent conversion of formylglycinamide ribonucleotide (FGAR) and glutamine to yield formylglycinamidine ribonucleotide (FGAM) and glutamate. The FGAM synthase complex is composed of three subunits. PurQ produces an ammonia molecule by converting glutamine to glutamate. PurL transfers the ammonia molecule to FGAR to form FGAM in an ATP-dependent manner. PurS interacts with PurQ and PurL and is thought to assist in the transfer of the ammonia molecule from PurQ to PurL. The sequence is that of Phosphoribosylformylglycinamidine synthase subunit PurL from Aquifex aeolicus (strain VF5).